The chain runs to 604 residues: Putative sodium-dependent multivitamin transporter (604 aa).

The next 6 membrane-spanning stretches (helical) occupy residues 4 to 24, 48 to 68, 78 to 98, 134 to 154, 160 to 180, and 188 to 208; these read LGAW…AIGI, VAPV…ILGV, MFVV…YLII, VLYM…VTGL, IVIV…KAVL, and LLMF…AGSL. N222 and N225 each carry an N-linked (GlcNAc...) asparagine glycan. Transmembrane regions (helical) follow at residues 234-254, 273-293, 331-351, 389-409, 413-433, 440-460, and 511-531; these read HTWF…YGVN, ALWW…FSGL, LAGL…SSII, LFFG…GGLL, LSIF…GMYV, GAIG…FGQP, and ALGF…FALL.

Belongs to the sodium:solute symporter (SSF) (TC 2.A.21) family.

Its subcellular location is the cell membrane. In Drosophila melanogaster (Fruit fly), this protein is Putative sodium-dependent multivitamin transporter.